Here is a 124-residue protein sequence, read N- to C-terminus: Small ribosomal subunit protein uS12 (124 aa).

Position 89 is a 3-methylthioaspartic acid (Asp89). The tract at residues 104–124 (ALGVEDRKRGRSKYGAKRPKA) is disordered. Positions 112–124 (RGRSKYGAKRPKA) are enriched in basic residues.

It belongs to the universal ribosomal protein uS12 family. In terms of assembly, part of the 30S ribosomal subunit. Contacts proteins S8 and S17. May interact with IF1 in the 30S initiation complex.

Its function is as follows. With S4 and S5 plays an important role in translational accuracy. Interacts with and stabilizes bases of the 16S rRNA that are involved in tRNA selection in the A site and with the mRNA backbone. Located at the interface of the 30S and 50S subunits, it traverses the body of the 30S subunit contacting proteins on the other side and probably holding the rRNA structure together. The combined cluster of proteins S8, S12 and S17 appears to hold together the shoulder and platform of the 30S subunit. The chain is Small ribosomal subunit protein uS12 from Treponema denticola (strain ATCC 35405 / DSM 14222 / CIP 103919 / JCM 8153 / KCTC 15104).